A 72-amino-acid polypeptide reads, in one-letter code: UPF0729 protein C18orf32 homolog (72 aa).

The interval M1 to P33 is necessary for its localzation to the endoplasmic reticulum and lipid droplets. The tract at residues T45–D72 is disordered.

This sequence belongs to the UPF0729 family. Interacts with DERL1 and AMFR. In terms of processing, undergoes ER-associated degradation (ERAD).

The protein resides in the endoplasmic reticulum. Its subcellular location is the lipid droplet. May activate the NF-kappa-B signaling pathway. The sequence is that of UPF0729 protein C18orf32 homolog from Rattus norvegicus (Rat).